The sequence spans 203 residues: Glycerol-3-phosphate acyltransferase (203 aa).

Transmembrane regions (helical) follow at residues 3 to 23 (ILLA…VVVS), 51 to 71 (KAAI…VWLV), 74 to 94 (FGIG…LGHL), 116 to 136 (AVHP…AFFF), 140 to 160 (SLAA…LFGT), and 164 to 178 (PVAW…LLIW).

It belongs to the PlsY family. In terms of assembly, probably interacts with PlsX.

The protein localises to the cell inner membrane. It carries out the reaction an acyl phosphate + sn-glycerol 3-phosphate = a 1-acyl-sn-glycero-3-phosphate + phosphate. The protein operates within lipid metabolism; phospholipid metabolism. Catalyzes the transfer of an acyl group from acyl-phosphate (acyl-PO(4)) to glycerol-3-phosphate (G3P) to form lysophosphatidic acid (LPA). This enzyme utilizes acyl-phosphate as fatty acyl donor, but not acyl-CoA or acyl-ACP. This is Glycerol-3-phosphate acyltransferase from Burkholderia mallei (strain ATCC 23344).